The sequence spans 517 residues: Putative thymidine phosphorylase (517 aa).

It belongs to the thymidine/pyrimidine-nucleoside phosphorylase family. Type 2 subfamily.

The enzyme catalyses thymidine + phosphate = 2-deoxy-alpha-D-ribose 1-phosphate + thymine. This is Putative thymidine phosphorylase from Legionella pneumophila (strain Corby).